The following is a 250-amino-acid chain: Triosephosphate isomerase (250 aa).

9–11 is a substrate binding site; that stretch reads NWK. H95 functions as the Electrophile in the catalytic mechanism. The active-site Proton acceptor is E167. Substrate-binding positions include G173, S213, and 234 to 235; that span reads GG.

The protein belongs to the triosephosphate isomerase family. As to quaternary structure, homodimer.

It is found in the cytoplasm. It carries out the reaction D-glyceraldehyde 3-phosphate = dihydroxyacetone phosphate. It participates in carbohydrate biosynthesis; gluconeogenesis. It functions in the pathway carbohydrate degradation; glycolysis; D-glyceraldehyde 3-phosphate from glycerone phosphate: step 1/1. Functionally, involved in the gluconeogenesis. Catalyzes stereospecifically the conversion of dihydroxyacetone phosphate (DHAP) to D-glyceraldehyde-3-phosphate (G3P). This chain is Triosephosphate isomerase, found in Chloroflexus aurantiacus (strain ATCC 29366 / DSM 635 / J-10-fl).